Here is a 155-residue protein sequence, read N- to C-terminus: SsrA-binding protein (155 aa).

Basic and acidic residues predominate over residues 132–147 (KRESIKRREQDRDIKR). The segment at 132–155 (KRESIKRREQDRDIKRQMKQFNGR) is disordered.

Belongs to the SmpB family.

Its subcellular location is the cytoplasm. Its function is as follows. Required for rescue of stalled ribosomes mediated by trans-translation. Binds to transfer-messenger RNA (tmRNA), required for stable association of tmRNA with ribosomes. tmRNA and SmpB together mimic tRNA shape, replacing the anticodon stem-loop with SmpB. tmRNA is encoded by the ssrA gene; the 2 termini fold to resemble tRNA(Ala) and it encodes a 'tag peptide', a short internal open reading frame. During trans-translation Ala-aminoacylated tmRNA acts like a tRNA, entering the A-site of stalled ribosomes, displacing the stalled mRNA. The ribosome then switches to translate the ORF on the tmRNA; the nascent peptide is terminated with the 'tag peptide' encoded by the tmRNA and targeted for degradation. The ribosome is freed to recommence translation, which seems to be the essential function of trans-translation. In Streptococcus mutans serotype c (strain ATCC 700610 / UA159), this protein is SsrA-binding protein.